The chain runs to 96 residues: Protein YdfX (96 aa).

This is Protein YdfX (ydfX) from Escherichia coli (strain K12).